We begin with the raw amino-acid sequence, 55 residues long: uncharacterized protein (55 aa).

A helical transmembrane segment spans residues 27–44 (SFWFILISASSFLIYSLF).

It is found in the membrane. This is an uncharacterized protein from Dictyostelium discoideum (Social amoeba).